The following is an 874-amino-acid chain: Envelope glycoprotein B (874 aa).

An N-terminal signal peptide occupies residues 1 to 25 (MGVGGGPRVVLCLWCVAALLCQGVA). Residues 26-727 (QEVVAETTTP…SGVISFFKNP (702 aa)) lie on the Virion surface side of the membrane. Cystine bridges form between Cys-59-Cys-523, Cys-77-Cys-479, Cys-149-Cys-214, Cys-306-Cys-353, and Cys-546-Cys-583. Residues 116–122 (IYKGWSE) form an involved in fusion and/or binding to host membrane region. The N-linked (GlcNAc...) asparagine; by host glycan is linked to Asn-171. The segment at 200-208 (RNLLWSYTT) is involved in fusion and/or binding to host membrane. Asn-247, Asn-281, Asn-302, Asn-323, Asn-348, Asn-356, Asn-376, Asn-409, Asn-412, Asn-444, Asn-558, Asn-610, and Asn-624 each carry an N-linked (GlcNAc...) asparagine; by host glycan. The segment at 412-450 (NATASPTSTPTTSPRRRRRDTSSVSGGGNNGDNSTKEES) is disordered. The tract at residues 673–725 (LDDSIDHGRDSFIQTLGDIMQDLGTIGKVVVNVASGVFSLFGSIVSGVISFFK) is hydrophobic membrane proximal region. Residues 728–748 (FGGMLLIVLIIAGVVVVYLFM) traverse the membrane as a helical segment. The Intravirion segment spans residues 749–874 (TRSRSIYSAP…VEAGTADTGV (126 aa)). Residues 830–874 (RRGGGGYQRLQRDGSDDEGDYEPLRRQDGGYDDVDVEAGTADTGV) form a disordered region. Residues 836-839 (YQRL) carry the Internalization motif motif.

The protein belongs to the herpesviridae glycoprotein B family. In terms of assembly, homotrimer; disulfide-linked. Binds to heparan sulfate proteoglycans. Interacts with gH/gL heterodimer. In terms of processing, a proteolytic cleavage by host furin generates two subunits that remain linked by disulfide bonds.

It is found in the virion membrane. Its subcellular location is the host cell membrane. The protein localises to the host endosome membrane. The protein resides in the host Golgi apparatus membrane. Its function is as follows. Envelope glycoprotein that forms spikes at the surface of virion envelope. Essential for the initial attachment to heparan sulfate moieties of the host cell surface proteoglycans. Involved in fusion of viral and cellular membranes leading to virus entry into the host cell. Following initial binding to its host receptors, membrane fusion is mediated by the fusion machinery composed at least of gB and the heterodimer gH/gL. May be involved in the fusion between the virion envelope and the outer nuclear membrane during virion egress. This is Envelope glycoprotein B from Equus caballus (Horse).